The following is a 60-amino-acid chain: HDRPTFCNLAPESGRCRGHLRRIYYNLESNKCKVFFYGGCGGNANNFETRDECRETCGGK.

The BPTI/Kunitz inhibitor domain occupies 7–57 (CNLAPESGRCRGHLRRIYYNLESNKCKVFFYGGCGGNANNFETRDECRETC). Cystine bridges form between Cys-7-Cys-57, Cys-16-Cys-40, and Cys-32-Cys-53.

Belongs to the venom Kunitz-type family. As to expression, expressed by the venom gland.

It localises to the secreted. In terms of biological role, serine protease inhibitor. The chain is Kunitz-type serine protease inhibitor 2 from Daboia siamensis (Eastern Russel's viper).